A 322-amino-acid polypeptide reads, in one-letter code: Homoserine kinase (322 aa).

This sequence belongs to the pseudomonas-type ThrB family.

The catalysed reaction is L-homoserine + ATP = O-phospho-L-homoserine + ADP + H(+). Its pathway is amino-acid biosynthesis; L-threonine biosynthesis; L-threonine from L-aspartate: step 4/5. This Agrobacterium fabrum (strain C58 / ATCC 33970) (Agrobacterium tumefaciens (strain C58)) protein is Homoserine kinase.